Reading from the N-terminus, the 226-residue chain is Ribonuclease 3 (226 aa).

Positions 6–128 constitute an RNase III domain; the sequence is INRLQRKLGY…LIGAIFLDSD (123 aa). E41 is a Mg(2+) binding site. The active site involves D45. Mg(2+)-binding residues include D114 and E117. Residue E117 is part of the active site. In terms of domain architecture, DRBM spans 155–225; the sequence is DPKTRLQEYL…AEQALKQLEL (71 aa).

Belongs to the ribonuclease III family. Homodimer. The cofactor is Mg(2+).

Its subcellular location is the cytoplasm. It catalyses the reaction Endonucleolytic cleavage to 5'-phosphomonoester.. Functionally, digests double-stranded RNA. Involved in the processing of primary rRNA transcript to yield the immediate precursors to the large and small rRNAs (23S and 16S). Processes some mRNAs, and tRNAs when they are encoded in the rRNA operon. Processes pre-crRNA and tracrRNA of type II CRISPR loci if present in the organism. The protein is Ribonuclease 3 of Photorhabdus laumondii subsp. laumondii (strain DSM 15139 / CIP 105565 / TT01) (Photorhabdus luminescens subsp. laumondii).